A 215-amino-acid chain; its full sequence is UPF0502 protein YceH (215 aa).

This sequence belongs to the UPF0502 family.

In Salmonella paratyphi A (strain ATCC 9150 / SARB42), this protein is UPF0502 protein YceH.